A 166-amino-acid polypeptide reads, in one-letter code: Ribosome maturation factor RimP (166 aa).

This sequence belongs to the RimP family.

It localises to the cytoplasm. Required for maturation of 30S ribosomal subunits. The sequence is that of Ribosome maturation factor RimP from Paramagnetospirillum magneticum (strain ATCC 700264 / AMB-1) (Magnetospirillum magneticum).